We begin with the raw amino-acid sequence, 461 residues long: Cysteine--tRNA ligase (461 aa).

Position 28 (Cys28) interacts with Zn(2+). The short motif at 30–40 (ITVYDLCHIGH) is the 'HIGH' region element. Zn(2+) is bound by residues Cys209, His234, and Glu238. The 'KMSKS' region signature appears at 266–270 (KMSKS). Residue Lys269 coordinates ATP.

This sequence belongs to the class-I aminoacyl-tRNA synthetase family. As to quaternary structure, monomer. Requires Zn(2+) as cofactor.

It is found in the cytoplasm. It catalyses the reaction tRNA(Cys) + L-cysteine + ATP = L-cysteinyl-tRNA(Cys) + AMP + diphosphate. The polypeptide is Cysteine--tRNA ligase (Salmonella agona (strain SL483)).